Reading from the N-terminus, the 91-residue chain is Dynein 8 kDa light chain, flagellar outer arm (91 aa).

It belongs to the dynein light chain family. As to quaternary structure, consists of at least 3 heavy chains (alpha, beta and gamma), 2 intermediate chains and 8 light chains.

The protein resides in the cytoplasm. It localises to the cytoskeleton. The protein localises to the flagellum axoneme. The sequence is that of Dynein 8 kDa light chain, flagellar outer arm from Chlamydomonas reinhardtii (Chlamydomonas smithii).